The following is a 327-amino-acid chain: Interleukin-12 subunit beta (327 aa).

An N-terminal signal peptide occupies residues 1–22 (MHPQQLVVSWFSLVLLASPIVA). The region spanning 23–106 (IWELEKNVYI…LSRSLLLLHK (84 aa)) is the Ig-like C2-type domain. An intrachain disulfide couples Cys50 to Cys90. Residue Asn223 is glycosylated (N-linked (GlcNAc...) asparagine). The Fibronectin type-III domain occupies 238 to 327 (PPKNLQLKPL…WSEWASVSCS (90 aa)).

The protein belongs to the IL-12B family. As to quaternary structure, heterodimer with IL12A; disulfide-linked. The heterodimer is known as interleukin IL-12. Heterodimer with IL23A; disulfide-linked. The heterodimer is known as interleukin IL-23. Also secreted as a monomer. Interacts with NBR1; this interaction promotes IL-12 secretion.

Cytokine that can act as a growth factor for activated T and NK cells, enhance the lytic activity of NK/lymphokine-activated killer cells, and stimulate the production of IFN-gamma by resting PBMC. Its function is as follows. Associates with IL23A to form the IL-23 interleukin, a heterodimeric cytokine which functions in innate and adaptive immunity. IL-23 may constitute with IL-17 an acute response to infection in peripheral tissues. IL-23 binds to a heterodimeric receptor complex composed of IL12RB1 and IL23R, activates the Jak-Stat signaling cascade, stimulates memory rather than naive T-cells and promotes production of pro-inflammatory cytokines. IL-23 induces autoimmune inflammation and thus may be responsible for autoimmune inflammatory diseases and may be important for tumorigenesis. This chain is Interleukin-12 subunit beta (IL12B), found in Bubalus bubalis (Domestic water buffalo).